The primary structure comprises 869 residues: Leucine--tRNA ligase (869 aa).

A 'HIGH' region motif is present at residues 42–52; that stretch reads PYPSGRLHMGH. The 'KMSKS' region motif lies at 620–624; sequence KMSKS. Lys623 lines the ATP pocket.

Belongs to the class-I aminoacyl-tRNA synthetase family.

It is found in the cytoplasm. The enzyme catalyses tRNA(Leu) + L-leucine + ATP = L-leucyl-tRNA(Leu) + AMP + diphosphate. The sequence is that of Leucine--tRNA ligase from Hamiltonella defensa subsp. Acyrthosiphon pisum (strain 5AT).